The chain runs to 479 residues: MKFTLINEIIQHFKGDAVVVFSNSNTVFNDDNIQQLIKLNHFDSKPGKVLLLNLVSGFKSKQVIVSGLGDAPISAKNYVKALNAVIVILVEIKAKNLMVQHVGIKGFNELWVHEITAKVMCNATYKVQKVGNYKKQNSGIERITIQSTMDSVYGLMKGQAIADGMSLTRHLGDLPSNVCTPSYLAGTAISLAQEFNLECEVLEEVDMEKLGMGSLLAVSKGSSEPPKLISLSYRGNGNEKPIVLVGKGVTFDSGGISLKPGTGMDEMKYDMCGAASVLGVMRVIAQIKPNINLVVVLPAVENMPAHNASKPGDVVKSMSGKTIEILNTDAEGRLILCDALTYVKKFNPEVVIDIATLTGAVVVALGKYNSGLMSNDKNLANDIISASKVSLDGVWQLPIEDEYDELLQSNFADMANIGGSSEAGSITAGCFLSRFTQGYRWAHLDIAGTAWVSGDKKGATGRPVSLLTQFIMDQVQKRL.

Mn(2+) is bound by residues Lys-247 and Asp-252. Residue Lys-259 is part of the active site. Residues Asp-270, Asp-329, and Glu-331 each contribute to the Mn(2+) site. The active site involves Arg-333.

It belongs to the peptidase M17 family. Mn(2+) serves as cofactor.

The protein localises to the cytoplasm. The catalysed reaction is Release of an N-terminal amino acid, Xaa-|-Yaa-, in which Xaa is preferably Leu, but may be other amino acids including Pro although not Arg or Lys, and Yaa may be Pro. Amino acid amides and methyl esters are also readily hydrolyzed, but rates on arylamides are exceedingly low.. It carries out the reaction Release of an N-terminal amino acid, preferentially leucine, but not glutamic or aspartic acids.. In terms of biological role, presumably involved in the processing and regular turnover of intracellular proteins. Catalyzes the removal of unsubstituted N-terminal amino acids from various peptides. In Vesicomyosocius okutanii subsp. Calyptogena okutanii (strain HA), this protein is Probable cytosol aminopeptidase.